We begin with the raw amino-acid sequence, 291 residues long: NAD kinase (291 aa).

The active-site Proton acceptor is the D72. Residues 72–73, 146–147, R157, R174, D176, 187–192, and Q247 each bind NAD(+); these read DG, ND, and TAYSLS.

It belongs to the NAD kinase family. A divalent metal cation serves as cofactor.

It localises to the cytoplasm. It carries out the reaction NAD(+) + ATP = ADP + NADP(+) + H(+). Its function is as follows. Involved in the regulation of the intracellular balance of NAD and NADP, and is a key enzyme in the biosynthesis of NADP. Catalyzes specifically the phosphorylation on 2'-hydroxyl of the adenosine moiety of NAD to yield NADP. This chain is NAD kinase, found in Hydrogenovibrio crunogenus (strain DSM 25203 / XCL-2) (Thiomicrospira crunogena).